The sequence spans 203 residues: Large ribosomal subunit protein eL15 (203 aa).

The tract at residues 160 to 186 is disordered; it reads ESRGLTSTGKRSRGLNKGHRYNKTRAG. The span at 169-186 shows a compositional bias: basic residues; the sequence is KRSRGLNKGHRYNKTRAG.

Belongs to the eukaryotic ribosomal protein eL15 family. As to quaternary structure, component of the large ribosomal subunit (LSU). Mature N.crassa ribosomes consist of a small (40S) and a large (60S) subunit. The 40S small subunit contains 1 molecule of ribosomal RNA (18S rRNA) and at least 32 different proteins. The large 60S subunit contains 3 rRNA molecules (26S, 5.8S and 5S rRNA) and at least 42 different proteins.

It is found in the cytoplasm. In terms of biological role, component of the ribosome, a large ribonucleoprotein complex responsible for the synthesis of proteins in the cell. The small ribosomal subunit (SSU) binds messenger RNAs (mRNAs) and translates the encoded message by selecting cognate aminoacyl-transfer RNA (tRNA) molecules. The large subunit (LSU) contains the ribosomal catalytic site termed the peptidyl transferase center (PTC), which catalyzes the formation of peptide bonds, thereby polymerizing the amino acids delivered by tRNAs into a polypeptide chain. The nascent polypeptides leave the ribosome through a tunnel in the LSU and interact with protein factors that function in enzymatic processing, targeting, and the membrane insertion of nascent chains at the exit of the ribosomal tunnel. This Neurospora crassa (strain ATCC 24698 / 74-OR23-1A / CBS 708.71 / DSM 1257 / FGSC 987) protein is Large ribosomal subunit protein eL15 (rpl-15).